The following is a 734-amino-acid chain: E3 ubiquitin-protein ligase TRIM56 (734 aa).

An RING-type zinc finger spans residues 21–60; the sequence is CKICLEQLHTPKTLPCLHTYCQDCLAQLDIGGQVRCPECR. 2 B box-type zinc fingers span residues 98 to 149 and 164 to 205; these read KPTC…VVDL and RQAS…CLPL. Zn(2+) contacts are provided by Cys169, His172, Cys192, and His197. Residues 215-303 adopt a coiled-coil conformation; sequence GLEELLAGVD…KIERQEQVAK (89 aa). A compositionally biased stretch (basic and acidic residues) spans 372-381; that stretch reads EPKQSPKDSG. Positions 372 to 463 are disordered; sequence EPKQSPKDSG…SPILRPNLEG (92 aa). Positions 435-448 are enriched in basic residues; sequence RPNKKKKCKGRGKS. Ser454 carries the post-translational modification Phosphoserine.

Belongs to the TRIM/RBCC family. As to quaternary structure, interacts with STING1. Interacts with TICAM1.

The protein resides in the cytoplasm. It carries out the reaction S-ubiquitinyl-[E2 ubiquitin-conjugating enzyme]-L-cysteine + [acceptor protein]-L-lysine = [E2 ubiquitin-conjugating enzyme]-L-cysteine + N(6)-ubiquitinyl-[acceptor protein]-L-lysine.. The protein operates within protein modification; protein ubiquitination. E3 ubiquitin-protein ligase that plays a key role in innate antiviral immunity by mediating ubiquitination of CGAS and STING1. In response to pathogen- and host-derived double-stranded DNA (dsDNA), targets STING1 to 'Lys-63'-linked ubiquitination, thereby promoting its homodimerization, a step required for the production of type I interferon IFN-beta. Also mediates monoubiquitination of CGAS, thereby promoting CGAS oligomerization and subsequent activation. Independently of its E3 ubiquitin ligase activity, positive regulator of TLR3 signaling. Potentiates extracellular double stranded RNA (dsRNA)-induced expression of IFNB1 and interferon-stimulated genes ISG15, IFIT1/ISG56, CXCL10, OASL and CCL5/RANTES. This Mus musculus (Mouse) protein is E3 ubiquitin-protein ligase TRIM56.